The sequence spans 186 residues: Large ribosomal subunit protein uL10 (186 aa).

Belongs to the universal ribosomal protein uL10 family. Part of the ribosomal stalk of the 50S ribosomal subunit. The N-terminus interacts with L11 and the large rRNA to form the base of the stalk. The C-terminus forms an elongated spine to which L12 dimers bind in a sequential fashion forming a multimeric L10(L12)X complex.

Functionally, forms part of the ribosomal stalk, playing a central role in the interaction of the ribosome with GTP-bound translation factors. The sequence is that of Large ribosomal subunit protein uL10 from Roseiflexus sp. (strain RS-1).